The primary structure comprises 740 residues: Elongation factor 2 (740 aa).

The region spanning 18–263 (EQVRNIGIIA…MVVRWVPNPR (246 aa)) is the tr-type G domain. Residues 27–34 (AHVDHGKT), 93–97 (DTPGH), and 147–150 (NKVD) contribute to the GTP site. A Diphthamide modification is found at His606.

The protein belongs to the TRAFAC class translation factor GTPase superfamily. Classic translation factor GTPase family. EF-G/EF-2 subfamily.

Its subcellular location is the cytoplasm. Functionally, catalyzes the GTP-dependent ribosomal translocation step during translation elongation. During this step, the ribosome changes from the pre-translocational (PRE) to the post-translocational (POST) state as the newly formed A-site-bound peptidyl-tRNA and P-site-bound deacylated tRNA move to the P and E sites, respectively. Catalyzes the coordinated movement of the two tRNA molecules, the mRNA and conformational changes in the ribosome. This is Elongation factor 2 from Ignicoccus hospitalis (strain KIN4/I / DSM 18386 / JCM 14125).